The following is a 239-amino-acid chain: MGRKWNNIKDKKASKDANTSRIYAKFGREIYVAAKQGEPDPESNQALRVVLERAKTYNVPRTIIDRAVEKAKGGSEENYDELRYEGFGPNGAMVIVDTLTNNVNRTAADVRAAFSKNGGNMGVNGSVAYMFDATAVIGLEGKTSDEVLEILMEADVDVRDILEEEDAVIVYAEPDQFHAVQSALKDAGVEEFTVAELTMLAQNDVTLPEDAQAQFEKMVDALEDLEDVQQVYHNVDLGE.

It belongs to the TACO1 family. YeeN subfamily.

The protein resides in the cytoplasm. This chain is Probable transcriptional regulatory protein BCAH187_A0615, found in Bacillus cereus (strain AH187).